We begin with the raw amino-acid sequence, 48 residues long: uncharacterized protein (48 aa).

This is an uncharacterized protein from Schizosaccharomyces pombe (strain 972 / ATCC 24843) (Fission yeast).